A 188-amino-acid chain; its full sequence is dCTP deaminase (188 aa).

Residues 111-116 (KSTYAR), 135-137 (TLE), Q156, Y170, and Q180 contribute to the dCTP site. Catalysis depends on E137, which acts as the Proton donor/acceptor.

It belongs to the dCTP deaminase family. Homotrimer.

The enzyme catalyses dCTP + H2O + H(+) = dUTP + NH4(+). It participates in pyrimidine metabolism; dUMP biosynthesis; dUMP from dCTP (dUTP route): step 1/2. In terms of biological role, catalyzes the deamination of dCTP to dUTP. The protein is dCTP deaminase of Pseudomonas savastanoi pv. phaseolicola (strain 1448A / Race 6) (Pseudomonas syringae pv. phaseolicola (strain 1448A / Race 6)).